We begin with the raw amino-acid sequence, 620 residues long: Apoptosis regulator MC163R (620 aa).

A helical membrane pass occupies residues 113–133 (APLPLLLLPLLLPPMILLFFL).

The protein localises to the host mitochondrion. The protein resides in the host membrane. Functionally, plays a role in the inhibition of host apoptosis. Prevents host TNF-alpha-induced mitochondrial membrane permeabilization and reduces caspase-3/CASP3 and PARP1 cleavage induced by the intrinsic apoptotic pathway. The chain is Apoptosis regulator MC163R (MC163R) from Homo sapiens (Human).